A 994-amino-acid polypeptide reads, in one-letter code: Transposase for transposon Tn2501 (994 aa).

Belongs to the transposase 7 family.

Functionally, required for transposition of transposon Tn2501. This is Transposase for transposon Tn2501 (tnpA) from Escherichia coli.